A 951-amino-acid polypeptide reads, in one-letter code: Valine--tRNA ligase (951 aa).

Residues 42 to 52 (PNVTGSLHMGH) carry the 'HIGH' region motif. The 'KMSKS' region signature appears at 554–558 (KMSKS). Residue K557 participates in ATP binding. Residues 880–914 (AGLIDKAAELDRLAKEVAKLEAEIGRIESKLSNEG) are a coiled coil.

This sequence belongs to the class-I aminoacyl-tRNA synthetase family. ValS type 1 subfamily. In terms of assembly, monomer.

It localises to the cytoplasm. The catalysed reaction is tRNA(Val) + L-valine + ATP = L-valyl-tRNA(Val) + AMP + diphosphate. Functionally, catalyzes the attachment of valine to tRNA(Val). As ValRS can inadvertently accommodate and process structurally similar amino acids such as threonine, to avoid such errors, it has a 'posttransfer' editing activity that hydrolyzes mischarged Thr-tRNA(Val) in a tRNA-dependent manner. The protein is Valine--tRNA ligase of Pectobacterium atrosepticum (strain SCRI 1043 / ATCC BAA-672) (Erwinia carotovora subsp. atroseptica).